Here is a 432-residue protein sequence, read N- to C-terminus: Bouquet formation protein 4 (432 aa).

The interval 1–21 (MTENEKSRSLPAERNPLYKDD) is disordered. The HTH APSES-type domain occupies 38–147 (EFPDGPATFV…SSTPSTYATP (110 aa)). A DNA-binding region (H-T-H motif) is located at residues 73–94 (ATSMFRSAFPKATQEEEDLEMR). Low complexity-rich tracts occupy residues 139–152 (STPS…RPTA) and 163–172 (ESSTSATTTS). Disordered regions lie at residues 139–283 (STPS…GKIR) and 364–384 (KSSI…FEEN). Basic and acidic residues predominate over residues 180–228 (RLAEHLENSKKTILQHDNKEEDKEIHSEENETKDEIKSEKKEPEIKKQE). Over residues 229 to 241 (GGSSTEKVGQPSS) the composition is skewed to polar residues.

Interacts with rap1.

It is found in the cytoplasm. The protein localises to the nucleus. It localises to the nucleus inner membrane. In terms of biological role, connects telomeres to the nuclear envelop (NE) during both vegetative growth and meiosis. This connection ensures clustering of telomeres to the spindle pole body (SPB) when cells enter meiotic prophase. This chain is Bouquet formation protein 4 (bqt4), found in Schizosaccharomyces pombe (strain 972 / ATCC 24843) (Fission yeast).